Consider the following 660-residue polypeptide: Replication restart protein PriA (660 aa).

One can recognise a Helicase ATP-binding domain in the interval 145 to 313 (IIGSEKTNVF…KNNQIKKIIM (169 aa)). 158–165 (GIPGSGKT) is a binding site for ATP. The short motif at 256–259 (DEEH) is the DEAH box element. Residues Cys370, Cys373, Cys379, Cys382, Cys397, Cys400, Cys410, and Cys413 each contribute to the Zn(2+) site. Residues 405 to 557 (KTASHCPQCE…QFYEEELDIR (153 aa)) form the Helicase C-terminal domain.

Belongs to the helicase family. PriA subfamily. In terms of assembly, component of the replication restart primosome. The cofactor is Zn(2+).

The catalysed reaction is Couples ATP hydrolysis with the unwinding of duplex DNA by translocating in the 3'-5' direction.. It catalyses the reaction ATP + H2O = ADP + phosphate + H(+). Initiates the restart of stalled replication forks, which reloads the replicative helicase on sites other than the origin of replication. Recognizes and binds to abandoned replication forks and remodels them to uncover a helicase loading site. Promotes assembly of the primosome at these replication forks. In Borreliella burgdorferi (strain ATCC 35210 / DSM 4680 / CIP 102532 / B31) (Borrelia burgdorferi), this protein is Replication restart protein PriA.